The primary structure comprises 96 residues: Small ribosomal subunit protein bS18 (96 aa).

Belongs to the bacterial ribosomal protein bS18 family. In terms of assembly, part of the 30S ribosomal subunit. Forms a tight heterodimer with protein bS6.

Binds as a heterodimer with protein bS6 to the central domain of the 16S rRNA, where it helps stabilize the platform of the 30S subunit. The chain is Small ribosomal subunit protein bS18 from Gluconobacter oxydans (strain 621H) (Gluconobacter suboxydans).